The sequence spans 701 residues: Glycine--tRNA ligase beta subunit (701 aa).

It belongs to the class-II aminoacyl-tRNA synthetase family. As to quaternary structure, tetramer of two alpha and two beta subunits.

The protein localises to the cytoplasm. The catalysed reaction is tRNA(Gly) + glycine + ATP = glycyl-tRNA(Gly) + AMP + diphosphate. In Helicobacter pylori (strain G27), this protein is Glycine--tRNA ligase beta subunit.